Here is a 161-residue protein sequence, read N- to C-terminus: Peptidyl-prolyl cis-trans isomerase-like 3 (161 aa).

The PPIase cyclophilin-type domain maps to 1-153 (MSVTLHTSLG…NEIILKSVTI (153 aa)).

It belongs to the cyclophilin-type PPIase family. PPIL3 subfamily.

It catalyses the reaction [protein]-peptidylproline (omega=180) = [protein]-peptidylproline (omega=0). Functionally, PPIases accelerate the folding of proteins. It catalyzes the cis-trans isomerization of proline imidic peptide bonds in oligopeptides. This is Peptidyl-prolyl cis-trans isomerase-like 3 (ppil3) from Dictyostelium discoideum (Social amoeba).